Here is a 1324-residue protein sequence, read N- to C-terminus: Tetratricopeptide repeat protein 21 homolog (1324 aa).

TPR repeat units follow at residues 58–91 (PALAILKGVCLTLLGKIPDAIRHLETFVTDNDVA), 414–446 (SPLYYLIASVLAKQSKDKSFENFRQHIENLVEM), 582–615 (SLYHLIKSKTFKKRNENDEAIKTLKMALQIPRKE), 669–702 (DQLVIAQAQLYLTKGHVERALGILKKIQPGQSNF), 737–770 (PGSYSLLGDAFMKVQEPEDAINFYEQALKMQSKD), 772–804 (QLAEKIGEAYVMAHLYSKAVNFYESSMNIYKDK), 806–837 (MRLKLANLLLKLRNFEKCEKVLRAPFERDPEP), 847–880 (IQFLLLLAECHEMMDNVPEAMNDFEKAKSLHSRI), 894–927 (ARICNLQAELLYRRREFSQAVDICKQALAYHETD), 929–961 (KANLLLSKIFKEENKWTLVLQPCQTVIQVDPHN), 963–995 (EANSILADFYYIRSEAAHASTSYTTLLNTNPQH), 997–1029 (HALSRVVELFCRNGEQNAAEKHLDRAKEVNPRC), 1033–1066 (SGYNVCRGRFEWYTGDQNEALRYYSRTKDSAAGW), 1205–1238 (EKCWLMLADIYINQNKNDQAVTFLDLVFKYNCNC), 1240–1272 (KAFELYGYMREKEQKYVEAYKMYEKAFMATKER), and 1274–1307 (PGFGYKLAFTYLKAKRLFACIETCQKVLDLNPQY).

The protein belongs to the TTC21 family. As to quaternary structure, component of the IFT complex A (IFT-A) composed of at least che-11, daf-10, dyf-2, ift-139, ift-43 and ifta-1. Expressed in ciliated sensory neurons in the head and tail.

It is found in the cell projection. The protein resides in the cilium. It localises to the cytoplasm. The protein localises to the cytoskeleton. Its subcellular location is the cilium basal body. It is found in the dendrite. Its function is as follows. Component of the IFT complex A (IFT-A), a complex required for retrograde ciliary transport. In particular, may act redundantly with the intraflagellar transport protein ift-43 to regulate the transport of specific ciliary cargo proteins such as che-3 which are related to motility. Functions in cilia biogenesis. This Caenorhabditis elegans protein is Tetratricopeptide repeat protein 21 homolog.